Reading from the N-terminus, the 347-residue chain is Quinolinate synthase (347 aa).

Iminosuccinate is bound by residues His47 and Ser68. Cys113 is a binding site for [4Fe-4S] cluster. Iminosuccinate is bound by residues 139–141 (YAN) and Ser156. Cys200 serves as a coordination point for [4Fe-4S] cluster. Residues 226-228 (HPE) and Thr243 contribute to the iminosuccinate site. Residue Cys297 coordinates [4Fe-4S] cluster.

Belongs to the quinolinate synthase family. Type 1 subfamily. The cofactor is [4Fe-4S] cluster.

Its subcellular location is the cytoplasm. The catalysed reaction is iminosuccinate + dihydroxyacetone phosphate = quinolinate + phosphate + 2 H2O + H(+). It participates in cofactor biosynthesis; NAD(+) biosynthesis; quinolinate from iminoaspartate: step 1/1. Catalyzes the condensation of iminoaspartate with dihydroxyacetone phosphate to form quinolinate. The sequence is that of Quinolinate synthase from Escherichia coli O157:H7.